We begin with the raw amino-acid sequence, 274 residues long: Large ribosomal subunit protein uL2 (274 aa).

The segment at 223-274 (VAMNPVDHPMGGGEGKASGGHPRSRTGLYAKGKKTRNTNKYSKNYILSRKKR) is disordered.

The protein belongs to the universal ribosomal protein uL2 family. In terms of assembly, part of the 50S ribosomal subunit. Forms a bridge to the 30S subunit in the 70S ribosome.

Its function is as follows. One of the primary rRNA binding proteins. Required for association of the 30S and 50S subunits to form the 70S ribosome, for tRNA binding and peptide bond formation. It has been suggested to have peptidyltransferase activity; this is somewhat controversial. Makes several contacts with the 16S rRNA in the 70S ribosome. The chain is Large ribosomal subunit protein uL2 from Amoebophilus asiaticus (strain 5a2).